Consider the following 228-residue polypeptide: R-spondin-4 (228 aa).

An N-terminal signal peptide occupies residues 1–19; that stretch reads MRAPLCLLLLLAHAVDMLA. Asn-34 carries N-linked (GlcNAc...) asparagine glycosylation. 11 disulfide bridges follow: Cys-35-Cys-41, Cys-38-Cys-47, Cys-50-Cys-69, Cys-73-Cys-88, Cys-91-Cys-98, Cys-95-Cys-104, Cys-107-Cys-118, Cys-122-Cys-135, Cys-139-Cys-181, Cys-150-Cys-157, and Cys-190-Cys-196. The stretch at 85–128 is one FU repeat; sequence ANRCKKCGATCESCFSQDFCIRCKRRFHLYKGKCLPSCPPGTLT. A TSP type-1 domain is found at 138–197; sequence ECEPSPWGSWSPCIHNGKTCGSGWGLETRVREAGPAKQEETASCRVLSESRKCPIKRLCP. The tract at residues 193–228 is disordered; sequence KRLCPGERNPRQKNRKDRRQRKDRKLERRPHQRGSQ. The segment covering 203-228 has biased composition (basic residues); sequence RQKNRKDRRQRKDRKLERRPHQRGSQ.

Belongs to the R-spondin family. In terms of assembly, binds heparin. Interacts with LGR4, LGR5 and LGR6.

The protein localises to the secreted. Functionally, activator of the canonical Wnt signaling pathway by acting as a ligand for LGR4-6 receptors. Upon binding to LGR4-6 (LGR4, LGR5 or LGR6), LGR4-6 associate with phosphorylated LRP6 and frizzled receptors that are activated by extracellular Wnt receptors, triggering the canonical Wnt signaling pathway to increase expression of target genes. Also regulates the canonical Wnt/beta-catenin-dependent pathway and non-canonical Wnt signaling by acting as an inhibitor of ZNRF3, an important regulator of the Wnt signaling pathway. The chain is R-spondin-4 (Rspo4) from Mus musculus (Mouse).